An 882-amino-acid chain; its full sequence is Liprin-beta-2 (882 aa).

Residues 101-303 (AASNETYQER…DKDRRIEELT (203 aa)) adopt a coiled-coil conformation. Phosphoserine is present on residues serine 328, serine 362, and serine 386. Residues 339–554 (RKWNTTNKSP…SRTRDTKGQK (216 aa)) form a disordered region. Basic and acidic residues predominate over residues 388–399 (EDLRRESGDKCV). 2 stretches are compositionally biased toward polar residues: residues 442-457 (PTAS…SQPK) and 481-495 (SSAS…QSPV). Serine 502 and serine 518 each carry phosphoserine. Over residues 502 to 515 (SPKGIKKFWGKIRR) the composition is skewed to basic residues. SAM domains are found at residues 564 to 628 (WSTE…INAK), 636 to 699 (LDHI…LHVN), and 724 to 789 (WSNH…KFNA).

The protein belongs to the liprin family. Liprin-beta subfamily. In terms of assembly, forms homodimers and heterodimers. Expressed widely. Strong expression in liver, kidney, intestine, heart, lung and testis. Low expression in brain and thymus.

Its function is as follows. May regulate the disassembly of focal adhesions. Did not bind receptor-like tyrosine phosphatases type 2A. This chain is Liprin-beta-2 (Ppfibp2), found in Mus musculus (Mouse).